Here is a 324-residue protein sequence, read N- to C-terminus: Dehydrogenase/reductase SDR family member 7C-A (324 aa).

Residues 1–17 (MAVPSVMVLPLLIVVFA) form the signal peptide. 41-65 (VITDAVSGMGSECARLFHAGGARLV) contributes to the NAD(+) binding site. Substrate is bound at residue Ser178. Catalysis depends on Tyr191, which acts as the Proton acceptor.

The protein belongs to the short-chain dehydrogenases/reductases (SDR) family.

It is found in the secreted. Putative oxidoreductase. The chain is Dehydrogenase/reductase SDR family member 7C-A (dhrs7ca) from Danio rerio (Zebrafish).